Consider the following 373-residue polypeptide: Heterogeneous nuclear ribonucleoprotein A3 homolog 1 (373 aa).

Residues 1 to 25 form a disordered region; it reads MPRGGMDDHWPSSDDQGHDPKEPEQ. 2 RRM domains span residues 27–110 and 118–206; these read RKLF…DSAR and KKIF…SAQR. Disordered regions lie at residues 196–218 and 319–373; these read KQEMQTASAQRGRGGGGSNFMGR and DFGN…GRRF. Positions 207–218 are enriched in gly residues; it reads GRGGGGSNFMGR. Residues 319–333 show a composition bias toward low complexity; it reads DFGNYGGQQQSNYGP. Positions 334-373 are enriched in gly residues; sequence MKGGSFSGRSSGGSGSGPYGGGYGSGGGGGGGGSYGGRRF.

The protein localises to the nucleus. This chain is Heterogeneous nuclear ribonucleoprotein A3 homolog 1, found in Xenopus laevis (African clawed frog).